The chain runs to 562 residues: MFS-type transporter calB (562 aa).

The span at 1-16 (MDEVTRTAQRSPSITE) shows a compositional bias: polar residues. The interval 1-45 (MDEVTRTAQRSPSITETHAGETKLAGPGEKEGDVESPVDPSADSE) is disordered. Residues 57 to 77 (FAILASVTLSAFLMLLDGSII) form a helical membrane-spanning segment. N-linked (GlcNAc...) asparagine glycosylation is present at Asn83. 13 helical membrane passes run 94–113 (IGWYTAAYQLASAALQPLSG), 123–143 (WTYLFFFGLFELGSLICGVAN), 154–174 (VAGLGSSGLLNGGMTIIAGAV), 184–204 (GIYLGISQLGIVCGPLIGGAL), 213–233 (CFYINLPVGAVTAILLLFLQV), 256–276 (LIGFTLFAPAAIMVLLALYYG), 284–304 (SSQVIGLFCGAGVTIIVFALW), 329–349 (INGAALVASILVAAQYLPIYF), 362–382 (VNTLPGILSQLLTVILSGVLV), 389–409 (LPFAAAGSAISAVGNGIVTLF), 418–438 (WIGYQIVLGSGRGIGMQMGII), 451–471 (VGIAFMIFCQNFAGAIFVVVG), and 530–550 (VFYLLMSLSLAGFVAAFGMGW). Asn557 is a glycosylation site (N-linked (GlcNAc...) asparagine).

This sequence belongs to the major facilitator superfamily. TCR/Tet family.

The protein localises to the cell membrane. MFS-type transporter; part of the gene cluster that mediates the biosynthesis of calbistrin A and related compounds. Calbistrin A is a secondary metabolite with an interesting structure that was recently found to have bioactivity against leukemia cells. It consists of two polyketides linked by an ester bond: a bicyclic decalin containing polyketide and a linear 12 carbon dioic acid structure. Required for the secretion of calbistrin A and calbistrin C, as well as of related compounds decumbenone A, B and C. The chain is MFS-type transporter calB from Penicillium decumbens.